Reading from the N-terminus, the 93-residue chain is Small ribosomal subunit protein uS19 (93 aa).

It belongs to the universal ribosomal protein uS19 family.

Its function is as follows. Protein S19 forms a complex with S13 that binds strongly to the 16S ribosomal RNA. This chain is Small ribosomal subunit protein uS19, found in Rubrobacter xylanophilus (strain DSM 9941 / JCM 11954 / NBRC 16129 / PRD-1).